We begin with the raw amino-acid sequence, 534 residues long: CTP synthase (534 aa).

An amidoligase domain region spans residues Met-1 to Leu-267. Position 13 (Ser-13) interacts with CTP. Ser-13 contacts UTP. Residue Ser-14–Ile-19 participates in ATP binding. Tyr-54 provides a ligand contact to L-glutamine. ATP is bound at residue Asp-71. Mg(2+)-binding residues include Asp-71 and Glu-141. Residues Asp-148–Glu-150, Lys-188–Gln-193, and Lys-224 each bind CTP. UTP-binding positions include Lys-188–Gln-193 and Lys-224. The Glutamine amidotransferase type-1 domain occupies Lys-292–Lys-534. Gly-354 serves as a coordination point for L-glutamine. Cys-381 serves as the catalytic Nucleophile; for glutamine hydrolysis. L-glutamine-binding positions include Leu-382 to Gln-385, Glu-405, and Arg-463. Residues His-508 and Glu-510 contribute to the active site.

This sequence belongs to the CTP synthase family. Homotetramer.

It carries out the reaction UTP + L-glutamine + ATP + H2O = CTP + L-glutamate + ADP + phosphate + 2 H(+). It catalyses the reaction L-glutamine + H2O = L-glutamate + NH4(+). The enzyme catalyses UTP + NH4(+) + ATP = CTP + ADP + phosphate + 2 H(+). It functions in the pathway pyrimidine metabolism; CTP biosynthesis via de novo pathway; CTP from UDP: step 2/2. Allosterically activated by GTP, when glutamine is the substrate; GTP has no effect on the reaction when ammonia is the substrate. The allosteric effector GTP functions by stabilizing the protein conformation that binds the tetrahedral intermediate(s) formed during glutamine hydrolysis. Inhibited by the product CTP, via allosteric rather than competitive inhibition. Catalyzes the ATP-dependent amination of UTP to CTP with either L-glutamine or ammonia as the source of nitrogen. Regulates intracellular CTP levels through interactions with the four ribonucleotide triphosphates. This chain is CTP synthase, found in Streptococcus thermophilus (strain ATCC BAA-250 / LMG 18311).